We begin with the raw amino-acid sequence, 65 residues long: Large ribosomal subunit protein uL30 (65 aa).

Belongs to the universal ribosomal protein uL30 family. In terms of assembly, part of the 50S ribosomal subunit.

In Aster yellows witches'-broom phytoplasma (strain AYWB), this protein is Large ribosomal subunit protein uL30.